The sequence spans 365 residues: LIM and cysteine-rich domains protein 1 (365 aa).

Serine 16 is subject to Phosphoserine. In terms of domain architecture, PET spans 99 to 206 (MIMTNPIATG…GEVALPGQGG (108 aa)). Positions 200–235 (ALPGQGGLPKEEGKQQEKPEGAETTAATTNGSLSDP) are disordered. Residues 208 to 220 (PKEEGKQQEKPEG) show a composition bias toward basic and acidic residues. 2 LIM zinc-binding domains span residues 241–306 (YVCE…SLRP) and 307–365 (RCSG…SKRS).

As to quaternary structure, interacts with GATA1 and GATA4. Interacts with beta-dystroglycan. Interacts with GATA6. As to expression, expressed in the heart (at protein level). Expressed in many tissues with highest abundance in skeletal muscle.

Its subcellular location is the cytoplasm. It localises to the nucleus. Functionally, transcriptional cofactor that restricts GATA6 function by inhibiting DNA-binding, resulting in repression of GATA6 transcriptional activation of downstream target genes. Represses GATA6-mediated trans activation of lung- and cardiac tissue-specific promoters. Inhibits DNA-binding by GATA4 and GATA1 to the cTNC promoter. Plays a critical role in the development of cardiac hypertrophy via activation of calcineurin/nuclear factor of activated T-cells signaling pathway. This Homo sapiens (Human) protein is LIM and cysteine-rich domains protein 1 (LMCD1).